The sequence spans 59 residues: Large ribosomal subunit protein bL32 (59 aa).

This sequence belongs to the bacterial ribosomal protein bL32 family.

In Limosilactobacillus reuteri (strain DSM 20016) (Lactobacillus reuteri), this protein is Large ribosomal subunit protein bL32.